We begin with the raw amino-acid sequence, 228 residues long: uncharacterized protein (228 aa).

Residues 194 to 228 are disordered; that stretch reads SRRADEHPAPSTEPHAAAVAPEPDFMAEPIPALEE.

This is an uncharacterized protein from Treponema pallidum (strain Nichols).